The following is a 350-amino-acid chain: Dihydroorotate dehydrogenase (quinone) (350 aa).

Residues 65–69 (AGLDK) and Thr89 contribute to the FMN site. A substrate-binding site is contributed by Lys69. Position 114-118 (114-118 (NRLGF)) interacts with substrate. The FMN site is built by Asn149 and Asn182. Residue Asn182 coordinates substrate. Ser185 acts as the Nucleophile in catalysis. Asn187 serves as a coordination point for substrate. FMN contacts are provided by Lys227 and Thr255. A substrate-binding site is contributed by 256–257 (NT). Residues Gly278, Gly307, and 328-329 (YT) contribute to the FMN site.

Belongs to the dihydroorotate dehydrogenase family. Type 2 subfamily. As to quaternary structure, monomer. It depends on FMN as a cofactor.

The protein localises to the cell membrane. The enzyme catalyses (S)-dihydroorotate + a quinone = orotate + a quinol. It functions in the pathway pyrimidine metabolism; UMP biosynthesis via de novo pathway; orotate from (S)-dihydroorotate (quinone route): step 1/1. Functionally, catalyzes the conversion of dihydroorotate to orotate with quinone as electron acceptor. The chain is Dihydroorotate dehydrogenase (quinone) from Polaromonas naphthalenivorans (strain CJ2).